A 239-amino-acid chain; its full sequence is Purine nucleoside phosphorylase DeoD-type (239 aa).

Histidine 5 contributes to the a purine D-ribonucleoside binding site. The phosphate site is built by glycine 21 and arginine 25. N6-acetyllysine is present on lysine 27. Phosphate-binding positions include arginine 44 and arginine 88 to serine 91. A purine D-ribonucleoside-binding positions include glutamate 180–glutamate 182 and serine 204–aspartate 205. Aspartate 205 (proton donor) is an active-site residue.

It belongs to the PNP/UDP phosphorylase family. As to quaternary structure, homohexamer; trimer of homodimers.

It carries out the reaction a purine D-ribonucleoside + phosphate = a purine nucleobase + alpha-D-ribose 1-phosphate. It catalyses the reaction a purine 2'-deoxy-D-ribonucleoside + phosphate = a purine nucleobase + 2-deoxy-alpha-D-ribose 1-phosphate. Its function is as follows. Catalyzes the reversible phosphorolytic breakdown of the N-glycosidic bond in the beta-(deoxy)ribonucleoside molecules, with the formation of the corresponding free purine bases and pentose-1-phosphate. This chain is Purine nucleoside phosphorylase DeoD-type, found in Escherichia coli O81 (strain ED1a).